Reading from the N-terminus, the 215-residue chain is 3-dehydroquinate dehydratase (215 aa).

3-dehydroquinate contacts are provided by residues 30–32 and R62; that span reads EVR. H114 (proton donor/acceptor) is an active-site residue. K140 functions as the Schiff-base intermediate with substrate in the catalytic mechanism. R178 and Q201 together coordinate 3-dehydroquinate.

Belongs to the type-I 3-dehydroquinase family. As to quaternary structure, homodimer.

It carries out the reaction 3-dehydroquinate = 3-dehydroshikimate + H2O. The protein operates within metabolic intermediate biosynthesis; chorismate biosynthesis; chorismate from D-erythrose 4-phosphate and phosphoenolpyruvate: step 3/7. In terms of biological role, involved in the third step of the chorismate pathway, which leads to the biosynthesis of aromatic amino acids. Catalyzes the cis-dehydration of 3-dehydroquinate (DHQ) and introduces the first double bond of the aromatic ring to yield 3-dehydroshikimate. This chain is 3-dehydroquinate dehydratase, found in Methanopyrus kandleri (strain AV19 / DSM 6324 / JCM 9639 / NBRC 100938).